A 204-amino-acid chain; its full sequence is Rho GDP-dissociation inhibitor 1 (204 aa).

The segment at 1-36 (MAEQEPTAEQLAQIAAENEEDEHSVNYKPPAQKSIQ) is disordered. Ala-2 is subject to N-acetylalanine. Residue Ser-34 is modified to Phosphoserine. Lys-43 is modified (N6-acetyllysine). The residue at position 47 (Ser-47) is a Phosphoserine. Residues 66–83 (NVPNVVVTRLTLVCSTAP) form a hydrophobic region. At Ser-101 the chain carries Phosphoserine; by PKA. Lys-105 carries the N6-acetyllysine modification. A Phosphoserine; by PKC modification is found at Ser-115. Lys-127 carries the post-translational modification N6-acetyllysine. Glycyl lysine isopeptide (Lys-Gly) (interchain with G-Cter in SUMO1); alternate cross-links involve residues Lys-138 and Lys-141. Residues Lys-138 and Lys-141 each participate in a glycyl lysine isopeptide (Lys-Gly) (interchain with G-Cter in SUMO2); alternate cross-link. Lys-141 bears the N6-acetyllysine; alternate mark. The residue at position 141 (Lys-141) is an N6-succinyllysine; alternate. Lys-178 carries the N6-acetyllysine modification.

This sequence belongs to the Rho GDI family. Monomer. Interacts with FER. Interacts with PLXNB3. Forms a heterodimer with RAC1. Interacts with RHOA, the affinity is increased by three orders of magnitude when RHOA is prenylated. Interacts with PSMD10; the interaction increases ARHGDIA association with RHOA, leading to ARHGDIA-mediated inactivation of RHOA and ROCK and prolonged AKT activation. Interacts with KANK2; the interaction is direct and may regulate the interaction of ARHGDIA with RHOA, RAC1 and CDC42. Interacts with RHOC. Interacts with CDC42. Interacts with NGFR (via death domain); NGFR binding decreases the affinity for RHOA. In terms of tissue distribution, brain, lung, thymus, spleen, small intestine, and kidney, and weakly in heart and liver.

It localises to the cytoplasm. Controls Rho proteins homeostasis. Regulates the GDP/GTP exchange reaction of the Rho proteins by inhibiting the dissociation of GDP from them, and the subsequent binding of GTP to them. Retains Rho proteins such as CDC42, RAC1 and RHOA in an inactive cytosolic pool, regulating their stability and protecting them from degradation. Actively involved in the recycling and distribution of activated Rho GTPases in the cell, mediates extraction from membranes of both inactive and activated molecules due its exceptionally high affinity for prenylated forms. Through the modulation of Rho proteins, may play a role in cell motility regulation. In glioma cells, inhibits cell migration and invasion by mediating the signals of SEMA5A and PLXNB3 that lead to inactivation of RAC1. The chain is Rho GDP-dissociation inhibitor 1 (ARHGDIA) from Bos taurus (Bovine).